The chain runs to 160 residues: MLSPKRTKFRKQHRGRMKGIASKGNTIAFGQFALQAQDCGWVTARQIEASRRAMTRYVKRGGKIWIRIFPDKPVTMRPAETRMGSGKGNPEFWVAVVKPGRILFEMGGEEITEEIAKEAMRLAQYKLPVKTKFISSDINLSSDSSGEGKTGKDSKEEVKK.

A disordered region spans residues 138–160; it reads INLSSDSSGEGKTGKDSKEEVKK. Over residues 149 to 160 the composition is skewed to basic and acidic residues; sequence KTGKDSKEEVKK.

It belongs to the universal ribosomal protein uL16 family. In terms of assembly, part of the 50S ribosomal subunit.

In terms of biological role, binds 23S rRNA and is also seen to make contacts with the A and possibly P site tRNAs. The sequence is that of Large ribosomal subunit protein uL16 from Prochlorococcus marinus subsp. pastoris (strain CCMP1986 / NIES-2087 / MED4).